The primary structure comprises 899 residues: Inner tegument protein (899 aa).

An interaction with large tegument protein region spans residues 463-899 (WNYTWLDATS…SAILDAELSK (437 aa)).

This sequence belongs to the herpesviridae inner tegument protein family. Interacts (via C-terminus) with the large tegument protein/LTP (via N-terminus).

The protein resides in the virion tegument. Its subcellular location is the host cytoplasm. It localises to the host nucleus. It is found in the host Golgi apparatus. The protein localises to the host trans-Golgi network. Functionally, plays an essential role in cytoplasmic secondary envelopment during viral egress. Interacts with the capsid via the large tegument protein/LTP and participates in its transport to the host trans-Golgi network (TGN) where secondary envelopment occurs. Modulates tegumentation and capsid accumulation at the viral assembly complex. This is Inner tegument protein (63) from Saimiri sciureus (Common squirrel monkey).